Here is a 392-residue protein sequence, read N- to C-terminus: Galactokinase (392 aa).

Position 37–40 (37–40 (EHTD)) interacts with substrate. ATP is bound by residues Ser-71 and 128–134 (GAGLSSS). Mg(2+) is bound by residues Ser-134 and Glu-166. The active-site Proton acceptor is the Asp-178. Tyr-228 serves as a coordination point for substrate.

Belongs to the GHMP kinase family. GalK subfamily.

It localises to the cytoplasm. The catalysed reaction is alpha-D-galactose + ATP = alpha-D-galactose 1-phosphate + ADP + H(+). It participates in carbohydrate metabolism; galactose metabolism. Functionally, catalyzes the transfer of the gamma-phosphate of ATP to D-galactose to form alpha-D-galactose-1-phosphate (Gal-1-P). In Streptococcus pneumoniae serotype 4 (strain ATCC BAA-334 / TIGR4), this protein is Galactokinase.